A 485-amino-acid chain; its full sequence is Arginine biosynthesis bifunctional protein ArgJ, mitochondrial (485 aa).

Substrate contacts are provided by Thr185, Lys214, Thr225, and Glu315. Thr225 acts as the Nucleophile in catalysis.

The protein belongs to the ArgJ family. As to quaternary structure, heterodimer of an alpha and a beta chain. The alpha and beta chains are autoproteolytically processed from a single precursor protein within the mitochondrion.

The protein resides in the mitochondrion matrix. The catalysed reaction is N(2)-acetyl-L-ornithine + L-glutamate = N-acetyl-L-glutamate + L-ornithine. It carries out the reaction L-glutamate + acetyl-CoA = N-acetyl-L-glutamate + CoA + H(+). It functions in the pathway amino-acid biosynthesis; L-arginine biosynthesis; L-ornithine and N-acetyl-L-glutamate from L-glutamate and N(2)-acetyl-L-ornithine (cyclic): step 1/1. The protein operates within amino-acid biosynthesis; L-arginine biosynthesis; N(2)-acetyl-L-ornithine from L-glutamate: step 1/4. In terms of biological role, catalyzes two activities which are involved in the cyclic version of arginine biosynthesis: the synthesis of acetylglutamate from glutamate and acetyl-CoA, and of ornithine by transacetylation between acetylornithine and glutamate. This is Arginine biosynthesis bifunctional protein ArgJ, mitochondrial from Penicillium rubens (strain ATCC 28089 / DSM 1075 / NRRL 1951 / Wisconsin 54-1255) (Penicillium chrysogenum).